Consider the following 288-residue polypeptide: Transmembrane and coiled-coil domain-containing protein 5A (288 aa).

Residues 10-189 (KKNIISLNMD…ELETGYLERE (180 aa)) adopt a coiled-coil conformation. A helical transmembrane segment spans residues 227–249 (SLLFSTLFFIRLLGYLIFHLSFI).

The protein belongs to the TMCO5 family. As to expression, only detected in testis (at protein level).

It localises to the endoplasmic reticulum membrane. The protein localises to the nucleus membrane. This chain is Transmembrane and coiled-coil domain-containing protein 5A (Tmco5a), found in Mus musculus (Mouse).